The sequence spans 197 residues: Probable nicotinate-nucleotide adenylyltransferase (197 aa).

It belongs to the NadD family.

The enzyme catalyses nicotinate beta-D-ribonucleotide + ATP + H(+) = deamido-NAD(+) + diphosphate. It functions in the pathway cofactor biosynthesis; NAD(+) biosynthesis; deamido-NAD(+) from nicotinate D-ribonucleotide: step 1/1. Catalyzes the reversible adenylation of nicotinate mononucleotide (NaMN) to nicotinic acid adenine dinucleotide (NaAD). The polypeptide is Probable nicotinate-nucleotide adenylyltransferase (Bordetella pertussis (strain Tohama I / ATCC BAA-589 / NCTC 13251)).